Reading from the N-terminus, the 429-residue chain is Serine carboxypeptidase-like (429 aa).

Disulfide bonds link Cys58/Cys298, Cys226/Cys241, and Cys264/Cys269. N-linked (GlcNAc...) asparagine glycosylation is present at Asn76. Ser148 is a catalytic residue. Asp336 is an active-site residue. Residue Cys339 coordinates substrate. His393 is a catalytic residue. Residues Asn414 and Asn417 are each glycosylated (N-linked (GlcNAc...) asparagine).

Belongs to the peptidase S10 family. In terms of tissue distribution, abundant in germinated embryos composed of leaf, root, and scutellum.

This is Serine carboxypeptidase-like (CBP31) from Oryza sativa subsp. japonica (Rice).